The sequence spans 419 residues: DNA ligase (419 aa).

Positions 1-120 (MLNHFPGHCS…ARQKRGAHTN (120 aa)) are NTD. An AD domain region spans residues 121–317 (TGMIPPMLVK…NYHSAHLAKL (197 aa)). The active-site N6-AMP-lysine intermediate is Lys151. The tract at residues 318–419 (KPLLDAEFIL…REPINVLEII (102 aa)) is OB domain.

The protein belongs to the ATP-dependent DNA ligase family.

Its subcellular location is the virion. The catalysed reaction is ATP + (deoxyribonucleotide)n-3'-hydroxyl + 5'-phospho-(deoxyribonucleotide)m = (deoxyribonucleotide)n+m + AMP + diphosphate.. In terms of biological role, very low-fidelity DNA ligase that seals nicks in double-stranded DNA during DNA repair. Together with the viral repair DNA polymerase X, fills the single nucleotide gaps generated by the AP endonuclease. It is not essential for viral replication and recombination. Displays a very low adenylation activity towards DNA with 3'-dideoxy- or 3'-amino-terminated nicks compared to regular nick DNA. The protein is DNA ligase of Ornithodoros (relapsing fever ticks).